Consider the following 385-residue polypeptide: MKFSIISVALASAITVDAHGYLTIPFSRTRLGAEAGLDTCPECSILEPVTAWPNVTEAKVGRSGPCGYNARVSIDYNQPATNWGNSPVVTYTAGDTVDVQWCVDHNGDHGGMFSYRICQDQELVNKFLTPGYLPTEAEKQAAEDCFEKGTLPCTDVNGQSCDFSPDCQQGQACWRNDWFTCNAFQADSRRGCQGVDNAALGSCFTTIAGGYTVTKKIKIPNYISGHTLLSFRWNSFQTAQVYLSCADIAIVGDSASTTKVSATATTLVTSSKTASASCTPAATVAVTFNHLASTSYGESIKIVGSISQLGSWSASSGVALSASQYTTSNPLWTATVSLPAGTKFEYKFVKVSSEGSAVTWESDPNRSYTVPQSCAESVAVESSWK.

The signal sequence occupies residues Met-1–Ala-18. His-19 provides a ligand contact to Cu(2+). His-19 is modified (methylhistidine). One can recognise a Chitin-binding type-4 domain in the interval His-19 to Ile-248. Cys-40 and Cys-43 are oxidised to a cystine. N-linked (GlcNAc...) asparagine glycosylation is present at Asn-54. Cystine bridges form between Cys-66/Cys-245, Cys-102/Cys-203, Cys-118/Cys-145, Cys-153/Cys-161, Cys-167/Cys-173, and Cys-181/Cys-192. Residue His-109 participates in Cu(2+) binding. Cu(2+) is bound at residue Tyr-242. Residues Cys-278–Lys-385 form the CBM20 domain. The N-linked (GlcNAc...) asparagine glycan is linked to Asn-365.

It belongs to the polysaccharide monooxygenase AA13 family. Cu(2+) serves as cofactor.

The protein localises to the secreted. The catalysed reaction is starch + reduced acceptor + O2 = D-glucono-1,5-lactone-terminated malto-oligosaccharides + short-chain malto-oligosaccharides + acceptor + H2O.. Starch-active lytic polysaccharide monooxygenase that oxidizes the C1 position of starch substrates, but not in cellulose or chitin. Catalysis by LPMOs requires the reduction of the active-site copper from Cu(II) to Cu(I) by a reducing agent and H(2)O(2) or O(2) as a cosubstrate. The sequence is that of AA13 family lytic polysaccharide monooxygenase NCU08746 from Neurospora crassa (strain ATCC 24698 / 74-OR23-1A / CBS 708.71 / DSM 1257 / FGSC 987).